Consider the following 213-residue polypeptide: Leucyl/phenylalanyl-tRNA--protein transferase (213 aa).

The protein belongs to the L/F-transferase family.

It localises to the cytoplasm. The enzyme catalyses N-terminal L-lysyl-[protein] + L-leucyl-tRNA(Leu) = N-terminal L-leucyl-L-lysyl-[protein] + tRNA(Leu) + H(+). It catalyses the reaction N-terminal L-arginyl-[protein] + L-leucyl-tRNA(Leu) = N-terminal L-leucyl-L-arginyl-[protein] + tRNA(Leu) + H(+). It carries out the reaction L-phenylalanyl-tRNA(Phe) + an N-terminal L-alpha-aminoacyl-[protein] = an N-terminal L-phenylalanyl-L-alpha-aminoacyl-[protein] + tRNA(Phe). Its function is as follows. Functions in the N-end rule pathway of protein degradation where it conjugates Leu, Phe and, less efficiently, Met from aminoacyl-tRNAs to the N-termini of proteins containing an N-terminal arginine or lysine. The polypeptide is Leucyl/phenylalanyl-tRNA--protein transferase (Campylobacter lari (strain RM2100 / D67 / ATCC BAA-1060)).